The primary structure comprises 430 residues: UDP-glucose 6-dehydrogenase AglM (430 aa).

The active site involves C269.

Belongs to the UDP-glucose/GDP-mannose dehydrogenase family.

The catalysed reaction is UDP-alpha-D-glucose + 2 NAD(+) + H2O = UDP-alpha-D-glucuronate + 2 NADH + 3 H(+). It participates in nucleotide-sugar biosynthesis; UDP-alpha-D-glucuronate biosynthesis; UDP-alpha-D-glucuronate from UDP-alpha-D-glucose: step 1/1. Its pathway is cell surface structure biogenesis; S-layer biogenesis. With respect to regulation, activity improves as salinity decreases. In terms of biological role, involved in the assembly of a N-linked pentasaccharide that decorates the S-layer glycoprotein and flagellins. Involved in the biosynthesis of the hexuronic acids found at both positions 2 and 3 of the pentasaccharide. This Haloferax volcanii (strain ATCC 29605 / DSM 3757 / JCM 8879 / NBRC 14742 / NCIMB 2012 / VKM B-1768 / DS2) (Halobacterium volcanii) protein is UDP-glucose 6-dehydrogenase AglM (aglM).